Here is a 365-residue protein sequence, read N- to C-terminus: Sulfate/thiosulfate import ATP-binding protein CysA (365 aa).

Residues 3–237 (IEIARIKKSF…PATRFVLEFM (235 aa)) enclose the ABC transporter domain. 35-42 (GPSGSGKT) lines the ATP pocket.

The protein belongs to the ABC transporter superfamily. Sulfate/tungstate importer (TC 3.A.1.6) family. The complex is composed of two ATP-binding proteins (CysA), two transmembrane proteins (CysT and CysW) and a solute-binding protein (CysP).

The protein localises to the cell inner membrane. The enzyme catalyses sulfate(out) + ATP + H2O = sulfate(in) + ADP + phosphate + H(+). The catalysed reaction is thiosulfate(out) + ATP + H2O = thiosulfate(in) + ADP + phosphate + H(+). In terms of biological role, part of the ABC transporter complex CysAWTP involved in sulfate/thiosulfate import. Responsible for energy coupling to the transport system. This chain is Sulfate/thiosulfate import ATP-binding protein CysA, found in Salmonella typhimurium (strain LT2 / SGSC1412 / ATCC 700720).